The chain runs to 373 residues: Queuine tRNA-ribosyltransferase (373 aa).

The active-site Proton acceptor is the Asp90. Substrate contacts are provided by residues 90–94 (DSGGF), Asp144, Gln193, and Gly220. Residues 251 to 257 (GVGTPED) are RNA binding. Asp270 acts as the Nucleophile in catalysis. An RNA binding; important for wobble base 34 recognition region spans residues 275–279 (TRNAR). Residues Cys308, Cys310, Cys313, and His339 each coordinate Zn(2+).

Belongs to the queuine tRNA-ribosyltransferase family. In terms of assembly, homodimer. Within each dimer, one monomer is responsible for RNA recognition and catalysis, while the other monomer binds to the replacement base PreQ1. It depends on Zn(2+) as a cofactor.

It carries out the reaction 7-aminomethyl-7-carbaguanine + guanosine(34) in tRNA = 7-aminomethyl-7-carbaguanosine(34) in tRNA + guanine. It functions in the pathway tRNA modification; tRNA-queuosine biosynthesis. Its function is as follows. Catalyzes the base-exchange of a guanine (G) residue with the queuine precursor 7-aminomethyl-7-deazaguanine (PreQ1) at position 34 (anticodon wobble position) in tRNAs with GU(N) anticodons (tRNA-Asp, -Asn, -His and -Tyr). Catalysis occurs through a double-displacement mechanism. The nucleophile active site attacks the C1' of nucleotide 34 to detach the guanine base from the RNA, forming a covalent enzyme-RNA intermediate. The proton acceptor active site deprotonates the incoming PreQ1, allowing a nucleophilic attack on the C1' of the ribose to form the product. After dissociation, two additional enzymatic reactions on the tRNA convert PreQ1 to queuine (Q), resulting in the hypermodified nucleoside queuosine (7-(((4,5-cis-dihydroxy-2-cyclopenten-1-yl)amino)methyl)-7-deazaguanosine). The protein is Queuine tRNA-ribosyltransferase of Campylobacter jejuni subsp. jejuni serotype O:23/36 (strain 81-176).